A 510-amino-acid chain; its full sequence is Probable malate:quinone oxidoreductase (510 aa).

Belongs to the MQO family. Requires FAD as cofactor.

It catalyses the reaction (S)-malate + a quinone = a quinol + oxaloacetate. It participates in carbohydrate metabolism; tricarboxylic acid cycle; oxaloacetate from (S)-malate (quinone route): step 1/1. The chain is Probable malate:quinone oxidoreductase from Wigglesworthia glossinidia brevipalpis.